Here is a 396-residue protein sequence, read N- to C-terminus: MSCSVAVCNSPVFSPSSSLFCNKSSILSSPQESLSLTLSHRKPQTSSPSSPSTTVSSPKSPFRLRFQKPPSGFAPGPLSFGSESVSASSPPGGVLKRKRPTRLDIPIGVAGFVAPISSSAAVAATPREECREVEREGDGYSVYCKRGRREAMEDRFSAITNLHGDRKQAIFGVYDGHGGVKAAEFAAKNLDKNIVEEVVGKRDESEIAEAVKHGYLATDASFLKEEDVKGGSCCVTALVNEGNLVVSNAGDCRAVMSVGGVAKALSSDHRPSRDDERKRIETTGGYVDTFHGVWRIQGSLAVSRGIGDAQLKKWVIAEPETKISRIEHDHEFLILASDGLWDKVSNQEAVDIARPLCLGTEKPLLLAACKKLVDLSASRGSSDDISVMLIPLRQFI.

Residues 32-98 (ESLSLTLSHR…SPPGGVLKRK (67 aa)) form a disordered region. Positions 44–61 (QTSSPSSPSTTVSSPKSP) are enriched in low complexity. Residues 139–392 (GYSVYCKRGR…DDISVMLIPL (254 aa)) enclose the PPM-type phosphatase domain. Mn(2+) is bound by residues aspartate 175, glycine 176, aspartate 338, and aspartate 383.

Belongs to the PP2C family. Interacts with MPK4 and MPK6. Mg(2+) is required as a cofactor. Requires Mn(2+) as cofactor.

Its subcellular location is the cytoplasm. The protein localises to the nucleus. The enzyme catalyses O-phospho-L-seryl-[protein] + H2O = L-seryl-[protein] + phosphate. The catalysed reaction is O-phospho-L-threonyl-[protein] + H2O = L-threonyl-[protein] + phosphate. Its function is as follows. Protein phosphatase that negatively regulates defense respones. Inactivates MPK4 and MPK6 MAP kinases involved in stress and defense signaling. In Arabidopsis thaliana (Mouse-ear cress), this protein is Probable protein phosphatase 2C 25.